Reading from the N-terminus, the 368-residue chain is Isocitrate dehydrogenase [NAD] regulatory subunit 3, mitochondrial (368 aa).

The N-terminal 26 residues, 1–26 (MARRSVSIFNRLLANPPSPFTSLSRS), are a transit peptide targeting the mitochondrion.

The protein belongs to the isocitrate and isopropylmalate dehydrogenases family. In terms of assembly, heterooligomer of catalytic and regulatory subunits. Interacts with 14-3-3-like proteins GRF1 GRF3 and GRF8. Mainly expressed at a low level in pollen.

The protein localises to the mitochondrion. In terms of biological role, performs an essential role in the oxidative function of the citric acid cycle. In Arabidopsis thaliana (Mouse-ear cress), this protein is Isocitrate dehydrogenase [NAD] regulatory subunit 3, mitochondrial (IDH3).